The sequence spans 976 residues: Probable outer membrane protein PmpA (976 aa).

Residues 1-50 form the signal peptide; it reads MNQVIKTIALCYQKYISRASNKTFSIHNTLSLSLLPKCLLGSLIIYTSHA. In terms of domain architecture, Autotransporter spans 671-976; it reads GNAIPNSLWS…SLSCGGYVGF (306 aa).

The protein belongs to the PMP outer membrane protein family.

The protein resides in the secreted. It is found in the cell wall. It localises to the cell outer membrane. The chain is Probable outer membrane protein PmpA (pmpA) from Chlamydia muridarum (strain MoPn / Nigg).